Consider the following 131-residue polypeptide: Interleukin-13 (131 aa).

The signal sequence occupies residues 1–18 (MALWLTVVIALTCLGGLA). Asparagine 38, asparagine 48, asparagine 56, and asparagine 71 each carry an N-linked (GlcNAc...) asparagine glycan. 2 cysteine pairs are disulfide-bonded: cysteine 47–cysteine 75 and cysteine 63–cysteine 89.

Belongs to the IL-4/IL-13 family. As to quaternary structure, interacts with IL13RA2.

The protein resides in the secreted. Its function is as follows. Cytokine that plays important roles in allergic inflammation and immune response to parasite infection. Synergizes with IL2 in regulating interferon-gamma synthesis. Stimulates B-cell proliferation, and activation of eosinophils, basophils, and mast cells. Plays an important role in controlling IL33 activity by modulating the production of transmembrane and soluble forms of interleukin-1 receptor-like 1/IL1RL1. Displays the capacity to antagonize Th1-driven proinflammatory immune response and downregulates synthesis of many proinflammatory cytokines including IL1, IL6, IL10, IL12 and TNF-alpha through a mechanism that partially involves suppression of NF-kappa-B. Also functions on nonhematopoietic cells, including endothelial cells where it induces vascular cell adhesion protein 1/VCAM1, which is important in the recruitment of eosinophils. Exerts its biological effects through its receptors which comprises the IL4R chain and the IL13RA1 chain, to activate JAK1 and TYK2, leading to the activation of STAT6. Aside from IL13RA1, another receptor IL13RA2 acts as a high affinity decoy for IL13 and mediates internalization and depletion of extracellular IL13. This is Interleukin-13 (IL13) from Canis lupus familiaris (Dog).